A 623-amino-acid polypeptide reads, in one-letter code: Immunity-related GTPase family Q protein (623 aa).

Cysteines 152 and 158 form a disulfide. Residues 155 to 180 (SDGCEELERLRAALQSQAEALRRLLP) are a coiled coil. Residues 186–189 (FEVL) carry the LIR 1 motif. T203 carries the phosphothreonine modification. Residues 223 to 449 (ARLDLAVAGK…PGLCEWLRRA (227 aa)) form the IRG-type G domain. The disordered stretch occupies residues 334–393 (EGEDPECLGEGKMENPKGESLKNAGGGGLENALSKGREKCSAGSQKAGSGEGPGKAGSEG). A compositionally biased stretch (basic and acidic residues) spans 342-353 (GEGKMENPKGES). Residues 421-424 (WEVL) carry the LIR 2 motif.

Belongs to the TRAFAC class dynamin-like GTPase superfamily. IRG family. In terms of assembly, interacts (via LIR motif 1) with GABARAPL2. Interacts (via LIR motif 2) with MAP1LC3B/LC3B.

Its subcellular location is the lysosome. The protein resides in the cytoplasmic vesicle. The protein localises to the autophagosome. Its function is as follows. Autophagy receptor that specifically promotes clearance of misfolded MHC class I molecules by targeting them to the lysosome for degradation. Acts as a molecular adapter that specifically recognizes and binds (1) misfolded MHC class I molecules following their ubiquitination, as well as (2) autophagy-related proteins, promoting the recruitment of misfolded MHC class I molecules to autophagy machinery for degradation. Degradation of misfolded MHC class I molecules is essential to prevent accumulation of defective MHC class I complexes at the surface of CD8(+) T-cells and prevent a stronger T-cell-mediated response. In contrast to other members of the family, does not show GTPase activity. This Homo sapiens (Human) protein is Immunity-related GTPase family Q protein.